Here is a 172-residue protein sequence, read N- to C-terminus: Small ribosomal subunit protein uS5 (172 aa).

Residues 11–74 (LFESVVDIAR…RKAKGAMIRF (64 aa)) enclose the S5 DRBM domain.

This sequence belongs to the universal ribosomal protein uS5 family. In terms of assembly, part of the 30S ribosomal subunit. Contacts proteins S4 and S8.

In terms of biological role, with S4 and S12 plays an important role in translational accuracy. Located at the back of the 30S subunit body where it stabilizes the conformation of the head with respect to the body. This is Small ribosomal subunit protein uS5 from Neorickettsia sennetsu (strain ATCC VR-367 / Miyayama) (Ehrlichia sennetsu).